The chain runs to 331 residues: Probable leucine carboxyl methyltransferase 1 (331 aa).

S-adenosyl-L-methionine contacts are provided by residues Arg-82, Gly-107, Asp-131, 179–180, and Glu-206; that span reads DL.

The protein belongs to the methyltransferase superfamily. LCMT family.

The catalysed reaction is [phosphatase 2A protein]-C-terminal L-leucine + S-adenosyl-L-methionine = [phosphatase 2A protein]-C-terminal L-leucine methyl ester + S-adenosyl-L-homocysteine. Its function is as follows. Methylates the carboxyl group of the C-terminal leucine residue of protein phosphatase 2A catalytic subunits to form alpha-leucine ester residues. The polypeptide is Probable leucine carboxyl methyltransferase 1 (Caenorhabditis briggsae).